The primary structure comprises 285 residues: Cytochrome P450 monooxygenase eupD (285 aa).

An N-terminal signal peptide occupies residues 1 to 19; it reads MSIAGLVTTLPWLMNMLRA. Residue Cys-229 participates in heme binding.

The protein belongs to the cytochrome P450 family. Heme serves as cofactor.

It participates in secondary metabolite biosynthesis; terpenoid biosynthesis. In terms of biological role, cytochrome P450 monooxygenase; part of the gene cluster that mediates the biosynthesis of eupenifeldin, a bistropolone meroterpenoid that acts as an antitumor agent. The first step of eupenifeldin biosynthesis is the biosynthesis of 3-methylorcinaldehyde performed by the non-reducing polyketide synthase eupA. Oxidative dearomatization of 3-methylorcinaldehyde likely catalyzed by the FAD-dependent monooxygenase eupB is followed by oxidative ring expansion by the 2-oxoglutarate-dependent dioxygenase eupC to provide the first tropolone metabolite, tropolone stipitaldehyde. In parallel, generation of sesquiterpene alpha-humulene from farnesylpyrophosphate (FPP) is catalyzed by the terpene cyclase eupE. The cytochrome P450 monooxygenase eupD then hydroxylates humulene to humulenol. The putative Diels-Alderase eupF probably catalyzes the formation of the tropolone-humulene skeleton by linking humulenol and the polyketide moiety. The short-chain dehydrogenase/reductase eupG and the flavin-dependent monooxygenase eupH are also essential for eupenifeldin biosynthesis and are likely the additional decorating enzymes of the tropolone-humulene skeleton to produce final eupenifeldin or derivatives. The polypeptide is Cytochrome P450 monooxygenase eupD (Phoma sp).